The chain runs to 216 residues: TATA-box-binding protein-like 1 (216 aa).

2 consecutive repeat copies span residues 38-121 (KPVI…QRLG) and 126-210 (FNHF…ILLQ).

It belongs to the TBP family.

It localises to the nucleus. Its function is as follows. TATA box-binding transcription factor. Members of the TBP family are differentially required to regulate transcription and development during early embryogenesis. The polypeptide is TATA-box-binding protein-like 1 (trf1) (Entamoeba histolytica (strain ATCC 30459 / HM-1:IMSS / ABRM)).